Consider the following 296-residue polypeptide: Immediate early response gene 5-like protein (296 aa).

It belongs to the IER family.

The protein is Immediate early response gene 5-like protein (ier5l) of Xenopus tropicalis (Western clawed frog).